The sequence spans 129 residues: Large ribosomal subunit protein bL21 (129 aa).

This sequence belongs to the bacterial ribosomal protein bL21 family. As to quaternary structure, part of the 50S ribosomal subunit. Contacts protein L20.

In terms of biological role, this protein binds to 23S rRNA in the presence of protein L20. The chain is Large ribosomal subunit protein bL21 from Microcystis aeruginosa (strain NIES-843 / IAM M-2473).